Consider the following 94-residue polypeptide: Putative pterin-4-alpha-carbinolamine dehydratase (94 aa).

The protein belongs to the pterin-4-alpha-carbinolamine dehydratase family.

The catalysed reaction is (4aS,6R)-4a-hydroxy-L-erythro-5,6,7,8-tetrahydrobiopterin = (6R)-L-erythro-6,7-dihydrobiopterin + H2O. This chain is Putative pterin-4-alpha-carbinolamine dehydratase, found in Mycobacteroides abscessus (strain ATCC 19977 / DSM 44196 / CCUG 20993 / CIP 104536 / JCM 13569 / NCTC 13031 / TMC 1543 / L948) (Mycobacterium abscessus).